Reading from the N-terminus, the 208-residue chain is Small ribosomal subunit protein uS3 (208 aa).

Residues 16 to 85 enclose the KH type-2 domain; it reads VDEYLKNKLP…KPQIEVKQIE (70 aa).

This sequence belongs to the universal ribosomal protein uS3 family. As to quaternary structure, part of the 30S ribosomal subunit.

Binds the lower part of the 30S subunit head. The protein is Small ribosomal subunit protein uS3 of Methanococcus aeolicus (strain ATCC BAA-1280 / DSM 17508 / OCM 812 / Nankai-3).